A 306-amino-acid polypeptide reads, in one-letter code: Pseudouridine-5'-phosphate glycosidase (306 aa).

The active-site Proton donor is glutamate 27. Positions 88 and 108 each coordinate substrate. Aspartate 140 serves as a coordination point for Mn(2+). 142–144 (SAD) serves as a coordination point for substrate. Lysine 161 acts as the Nucleophile in catalysis.

This sequence belongs to the pseudouridine-5'-phosphate glycosidase family. In terms of assembly, homotrimer. Mn(2+) is required as a cofactor.

The catalysed reaction is D-ribose 5-phosphate + uracil = psi-UMP + H2O. Catalyzes the reversible cleavage of pseudouridine 5'-phosphate (PsiMP) to ribose 5-phosphate and uracil. Functions biologically in the cleavage direction, as part of a pseudouridine degradation pathway. The chain is Pseudouridine-5'-phosphate glycosidase from Petrotoga mobilis (strain DSM 10674 / SJ95).